The primary structure comprises 363 residues: NADH-quinone oxidoreductase subunit H (363 aa).

The next 10 helical transmembrane spans lie at 29–49 (VLKI…YVVW), 62–82 (GPMY…KLLF), 94–114 (AIFV…WAVV), 127–147 (VGLL…ILAG), 166–186 (VVSY…AAGS), 202–222 (FFDW…VSGV), 239–257 (IVAG…LFFL), 264–286 (ILVS…QGWV), 293–313 (LIDW…LFFA), and 339–359 (FIPL…SGVI).

It belongs to the complex I subunit 1 family. As to quaternary structure, NDH-1 is composed of 14 different subunits. Subunits NuoA, H, J, K, L, M, N constitute the membrane sector of the complex.

Its subcellular location is the cell inner membrane. It carries out the reaction a quinone + NADH + 5 H(+)(in) = a quinol + NAD(+) + 4 H(+)(out). Its function is as follows. NDH-1 shuttles electrons from NADH, via FMN and iron-sulfur (Fe-S) centers, to quinones in the respiratory chain. The immediate electron acceptor for the enzyme in this species is believed to be ubiquinone. Couples the redox reaction to proton translocation (for every two electrons transferred, four hydrogen ions are translocated across the cytoplasmic membrane), and thus conserves the redox energy in a proton gradient. This subunit may bind ubiquinone. The sequence is that of NADH-quinone oxidoreductase subunit H from Xylella fastidiosa (strain Temecula1 / ATCC 700964).